A 336-amino-acid polypeptide reads, in one-letter code: Anthranilate phosphoribosyltransferase (336 aa).

5-phospho-alpha-D-ribose 1-diphosphate-binding positions include glycine 80, 83–84 (GD), threonine 88, 90–93 (NIST), 108–116 (KHGNRSITS), and serine 120. Glycine 80 is a binding site for anthranilate. Serine 92 is a binding site for Mg(2+). Asparagine 111 is a binding site for anthranilate. Arginine 166 provides a ligand contact to anthranilate. Mg(2+)-binding residues include aspartate 224 and glutamate 225.

Belongs to the anthranilate phosphoribosyltransferase family. As to quaternary structure, homodimer. Mg(2+) is required as a cofactor.

It catalyses the reaction N-(5-phospho-beta-D-ribosyl)anthranilate + diphosphate = 5-phospho-alpha-D-ribose 1-diphosphate + anthranilate. The protein operates within amino-acid biosynthesis; L-tryptophan biosynthesis; L-tryptophan from chorismate: step 2/5. Functionally, catalyzes the transfer of the phosphoribosyl group of 5-phosphorylribose-1-pyrophosphate (PRPP) to anthranilate to yield N-(5'-phosphoribosyl)-anthranilate (PRA). The chain is Anthranilate phosphoribosyltransferase from Caldicellulosiruptor saccharolyticus (strain ATCC 43494 / DSM 8903 / Tp8T 6331).